The sequence spans 195 residues: FMN-dependent NADH:quinone oxidoreductase (195 aa).

Residues Ser-10, 16 to 18, and 91 to 94 contribute to the FMN site; these read SQS and MYNF.

Belongs to the azoreductase type 1 family. As to quaternary structure, homodimer. Requires FMN as cofactor.

The enzyme catalyses 2 a quinone + NADH + H(+) = 2 a 1,4-benzosemiquinone + NAD(+). It catalyses the reaction N,N-dimethyl-1,4-phenylenediamine + anthranilate + 2 NAD(+) = 2-(4-dimethylaminophenyl)diazenylbenzoate + 2 NADH + 2 H(+). In terms of biological role, quinone reductase that provides resistance to thiol-specific stress caused by electrophilic quinones. Also exhibits azoreductase activity. Catalyzes the reductive cleavage of the azo bond in aromatic azo compounds to the corresponding amines. This is FMN-dependent NADH:quinone oxidoreductase from Aeromonas salmonicida (strain A449).